A 325-amino-acid chain; its full sequence is Replication factor C small subunit (325 aa).

44-51 contacts ATP; it reads GPPGTGKT.

It belongs to the activator 1 small subunits family. RfcS subfamily. As to quaternary structure, heteromultimer composed of small subunits (RfcS) and large subunits (RfcL).

In terms of biological role, part of the RFC clamp loader complex which loads the PCNA sliding clamp onto DNA. The sequence is that of Replication factor C small subunit from Thermofilum pendens (strain DSM 2475 / Hrk 5).